The chain runs to 133 residues: Ribonuclease P protein component (133 aa).

This sequence belongs to the RnpA family. As to quaternary structure, consists of a catalytic RNA component (M1 or rnpB) and a protein subunit.

It carries out the reaction Endonucleolytic cleavage of RNA, removing 5'-extranucleotides from tRNA precursor.. Functionally, RNaseP catalyzes the removal of the 5'-leader sequence from pre-tRNA to produce the mature 5'-terminus. It can also cleave other RNA substrates such as 4.5S RNA. The protein component plays an auxiliary but essential role in vivo by binding to the 5'-leader sequence and broadening the substrate specificity of the ribozyme. This chain is Ribonuclease P protein component, found in Pseudomonas savastanoi pv. phaseolicola (strain 1448A / Race 6) (Pseudomonas syringae pv. phaseolicola (strain 1448A / Race 6)).